We begin with the raw amino-acid sequence, 352 residues long: Ribosome biogenesis protein BRX1 homolog (352 aa).

Residues 1-55 are disordered; sequence MGKFSKIKKVQEEESAHQKMEWEAAGAKDSSSDDSSDESDNDDQPKQATEETRKR. Over residues 9-22 the composition is skewed to basic and acidic residues; sequence KVQEEESAHQKMEW. Acidic residues predominate over residues 32–42; the sequence is SDDSSDESDND. Over residues 43–55 the composition is skewed to basic and acidic residues; the sequence is DQPKQATEETRKR. A Brix domain is found at 63-253; the sequence is ERVLVLCSRG…MVRLFAGSFE (191 aa).

This sequence belongs to the BRX1 family.

The protein localises to the nucleus. The protein resides in the nucleolus. Its function is as follows. Required for biogenesis of the 60S ribosomal subunit. This chain is Ribosome biogenesis protein BRX1 homolog, found in Caenorhabditis elegans.